We begin with the raw amino-acid sequence, 559 residues long: Formate--tetrahydrofolate ligase (559 aa).

68-75 (TPAGEGKT) lines the ATP pocket.

This sequence belongs to the formate--tetrahydrofolate ligase family.

The catalysed reaction is (6S)-5,6,7,8-tetrahydrofolate + formate + ATP = (6R)-10-formyltetrahydrofolate + ADP + phosphate. Its pathway is one-carbon metabolism; tetrahydrofolate interconversion. The protein is Formate--tetrahydrofolate ligase of Rhizobium rhizogenes (strain K84 / ATCC BAA-868) (Agrobacterium radiobacter).